We begin with the raw amino-acid sequence, 418 residues long: uncharacterized protein (418 aa).

Residues 282 to 297 (EEHSSIAKLDSEEKIR) are compositionally biased toward basic and acidic residues. Residues 282–346 (EEHSSIAKLD…SASVDDVSEE (65 aa)) form a disordered region. Low complexity predominate over residues 304-316 (SSTSLSPDPTSDN). Residues 322–337 (WVSSQDTSKNSSNLAS) are compositionally biased toward polar residues.

This is an uncharacterized protein from Schizosaccharomyces pombe (strain 972 / ATCC 24843) (Fission yeast).